The chain runs to 278 residues: Small ribosomal subunit protein uS3 (278 aa).

In terms of domain architecture, KH type-2 spans 39 to 107 (VRDFLKKRLA…PVHVNIEEVR (69 aa)). The disordered stretch occupies residues 217-278 (VENENEARRG…DAAAVEKEVS (62 aa)). Residues 230-239 (PRNDAGDNRG) show a composition bias toward basic and acidic residues.

This sequence belongs to the universal ribosomal protein uS3 family. As to quaternary structure, part of the 30S ribosomal subunit. Forms a tight complex with proteins S10 and S14.

In terms of biological role, binds the lower part of the 30S subunit head. Binds mRNA in the 70S ribosome, positioning it for translation. The polypeptide is Small ribosomal subunit protein uS3 (Aromatoleum aromaticum (strain DSM 19018 / LMG 30748 / EbN1) (Azoarcus sp. (strain EbN1))).